A 986-amino-acid chain; its full sequence is Ephrin type-A receptor 4 (986 aa).

The signal sequence occupies residues 1-19; it reads MAGIFYFILFSFLFGICDA. Over 20-547 the chain is Extracellular; sequence VTGSRVYPAN…RIIGDGANST (528 aa). Residues 30–209 enclose the Eph LBD domain; that stretch reads EVTLLDSRSV…FYKKCPLTVR (180 aa). N-linked (GlcNAc...) asparagine glycosylation is found at asparagine 235, asparagine 340, and asparagine 408. 2 consecutive Fibronectin type-III domains span residues 328-439 and 440-537; these read PPSA…TNQA and APSS…TVPS. The helical transmembrane segment at 548–569 threads the bilayer; the sequence is VLLVSVSGSVVLVVILIAAFVI. The Cytoplasmic portion of the chain corresponds to 570-986; sequence SRRRSKYSKA…QQMHGRMVPV (417 aa). 2 positions are modified to phosphotyrosine; by autocatalysis: tyrosine 596 and tyrosine 602. Residues 621-882 enclose the Protein kinase domain; that stretch reads IKIEKVIGVG…QIVNMLDKLI (262 aa). Residues 627 to 635 and lysine 653 each bind ATP; that span reads IGVGEFGEV. Residue aspartate 746 is the Proton acceptor of the active site. Tyrosine 779 and tyrosine 928 each carry phosphotyrosine; by autocatalysis. An SAM domain is found at 911 to 975; it reads SAVVSVGDWL…LSSVQAMRTQ (65 aa). The PDZ-binding motif lies at 984-986; that stretch reads VPV.

This sequence belongs to the protein kinase superfamily. Tyr protein kinase family. Ephrin receptor subfamily. In terms of assembly, heterotetramer upon binding of the ligand. The heterotetramer is composed of an ephrin dimer and a receptor dimer. Oligomerization is probably required to induce biological responses. Interacts (phosphorylated at position Tyr-602) with FYN. Interacts (via PDZ motif) with SIPA1L1 (via PDZ domain); controls neuronal morphology through regulation of the RAP1 (RAP1A or RAP1B) and RAP2 (RAP2A, RAP2B or RAP2C) GTPases. Interacts with CDK5, CDK5R1 and NGEF; upon activation by EFNA1 induces NGEF phosphorylation by the kinase CDK5. Interacts with CHN1; effector of EPHA4 in axon guidance linking EPHA4 activation to RAC1 regulation. Forms a ternary complex composed of ADAM10, CADH1 and EPHA4; within the complex, CADH1 is cleaved by ADAM10 which disrupts adherens junctions. In terms of tissue distribution, expressed in inner and outer pillar cells of the organ of Corti (at protein level). Highest expression in the adult brain and retina and also detectable in kidney, lung, skeletal muscle and thymus. Not detected in heart and liver. Expressed in myogenic progenitor cells.

The protein resides in the cell membrane. It is found in the cell projection. Its subcellular location is the axon. The protein localises to the dendrite. It localises to the postsynaptic density membrane. The protein resides in the early endosome. It is found in the cell junction. Its subcellular location is the adherens junction. The enzyme catalyses L-tyrosyl-[protein] + ATP = O-phospho-L-tyrosyl-[protein] + ADP + H(+). In terms of biological role, receptor tyrosine kinase which binds membrane-bound ephrin family ligands residing on adjacent cells, leading to contact-dependent bidirectional signaling into neighboring cells. The signaling pathway downstream of the receptor is referred to as forward signaling while the signaling pathway downstream of the ephrin ligand is referred to as reverse signaling. Highly promiscuous, it has the unique property among Eph receptors to bind and to be physiologically activated by both GPI-anchored ephrin-A and transmembrane ephrin-B ligands including EFNA1 and EFNB3. Upon activation by ephrin ligands, modulates cell morphology and integrin-dependent cell adhesion through regulation of the Rac, Rap and Rho GTPases activity. Plays an important role in the development of the nervous system controlling different steps of axonal guidance including the establishment of the corticospinal projections. May also control the segregation of motor and sensory axons during neuromuscular circuit developmen. In addition to its role in axonal guidance plays a role in synaptic plasticity. Activated by EFNA1 phosphorylates CDK5 at 'Tyr-15' which in turn phosphorylates NGEF regulating RHOA and dendritic spine morphogenesis. In the nervous system, also plays a role in repair after injury preventing axonal regeneration and in angiogenesis playing a role in central nervous system vascular formation. Additionally, its promiscuity makes it available to participate in a variety of cell-cell signaling regulating for instance the development of the thymic epithelium. During development of the cochlear organ of Corti, regulates pillar cell separation by forming a ternary complex with ADAM10 and CADH1 which facilitates the cleavage of CADH1 by ADAM10 and disruption of adherens junctions. Phosphorylates CAPRIN1, promoting CAPRIN1-dependent formation of a membraneless compartment. The protein is Ephrin type-A receptor 4 (Epha4) of Mus musculus (Mouse).